Consider the following 280-residue polypeptide: MKNKDYPLRTSMDELSTKNDNEIDLEKGPLPEYNSEDGSTLPPYSDLNNPKQMGQNITKLFNWNKSTTPPDYDENRLPITDEGNNPPNTHRENHSSGTTDNSSPFLIKLLISFTSIILFNAPAVCYLKYKDAFFKNYGAAEWTLIGFWCASSLIIFTFSWYFYETWTKAVGKGIKHFLKKWRNIPMAFSEVFLFNILVGSPRVALRHISGERWGLKCSLADHIIFAILSILVFIVETVEPGSSKINIMKRLRGDNARDATQHVNEYTAVPLREMNPESEA.

Residues 1–29 (MKNKDYPLRTSMDELSTKNDNEIDLEKGP) show a composition bias toward basic and acidic residues. 2 disordered regions span residues 1–49 (MKNK…DLNN) and 64–100 (NKST…GTTD). The next 4 membrane-spanning stretches (helical) occupy residues 105-125 (FLIK…PAVC), 142-162 (WTLI…SWYF), 184-204 (IPMA…PRVA), and 218-238 (SLAD…VETV).

It belongs to the WTF family. Homomer. Forms protein aggregates. The two isoforms can interact with each other and with themselves. High sequence similarity is required for their interaction.

It localises to the spore membrane. Its subcellular location is the vacuole membrane. It is found in the ascus epiplasm. The protein resides in the cytoplasm. The protein localises to the endoplasmic reticulum membrane. Functionally, promotes unequal transmission of alleles from the parental zygote to progeny spores by acting as poison/antidote system where the poison and antidote proteins are produced from the same locus; the poison component is trans-acting and targets all spores within an ascus whereas the antidote component is spore-specific, leading to poisoning of all progeny that do not inherit the allele. In terms of biological role, localizes isoform 2 to the vacuole thereby facilitating its degradation. Forms toxic aggregates that disrupt spore maturation. The polypeptide is Meiotic driver wtf35 (Schizosaccharomyces pombe (Fission yeast)).